Reading from the N-terminus, the 215-residue chain is Large ribosomal subunit protein uL3 (215 aa).

Gln151 carries the post-translational modification N5-methylglutamine.

It belongs to the universal ribosomal protein uL3 family. Part of the 50S ribosomal subunit. Forms a cluster with proteins L14 and L19. Post-translationally, methylated by PrmB.

Its function is as follows. One of the primary rRNA binding proteins, it binds directly near the 3'-end of the 23S rRNA, where it nucleates assembly of the 50S subunit. The protein is Large ribosomal subunit protein uL3 of Rickettsia bellii (strain OSU 85-389).